The primary structure comprises 245 residues: Orotidine 5'-phosphate decarboxylase (245 aa).

Substrate contacts are provided by residues Asp-22, Lys-44, 71 to 80, Thr-131, Arg-192, Gln-201, Gly-221, and Arg-222; that span reads DLKFHDIPNT. Lys-73 serves as the catalytic Proton donor.

The protein belongs to the OMP decarboxylase family. Type 1 subfamily. Homodimer.

The catalysed reaction is orotidine 5'-phosphate + H(+) = UMP + CO2. The protein operates within pyrimidine metabolism; UMP biosynthesis via de novo pathway; UMP from orotate: step 2/2. Its function is as follows. Catalyzes the decarboxylation of orotidine 5'-monophosphate (OMP) to uridine 5'-monophosphate (UMP). The chain is Orotidine 5'-phosphate decarboxylase from Salmonella typhimurium (strain LT2 / SGSC1412 / ATCC 700720).